We begin with the raw amino-acid sequence, 277 residues long: MKISLNGISVQHPSAKPGAVPALREQNLTVRAGEQLAIIGPSGAGKTTLLHLLACALKPSAGSMLLNDQDPWQLSRGALQKLRGALFLAPQVPPLPPRQRVVTAVLAGRLPNESLWASLRSLFYPTDIALAERALAGFDVGDKLFDRVDRLSGGERQRVGLARALVSQASLILVDEPLSALDPTRSQHAIETLTRAAQERGATLVATLHHVEMALAHFPRIVGLRDGQVAFDLPAAEVTPELLQALYAQHLHELTGLANLEADDLPTDPAPVVMHCR.

An ABC transporter domain is found at 3 to 251 (ISLNGISVQH…LLQALYAQHL (249 aa)). ATP is bound at residue 40-47 (GPSGAGKT).

It belongs to the ABC transporter superfamily. Phosphonates importer (TC 3.A.1.9.1) family. The complex is composed of two ATP-binding proteins (PhnC), two transmembrane proteins (PhnE) and a solute-binding protein (PhnD).

The protein resides in the cell inner membrane. The catalysed reaction is phosphonate(out) + ATP + H2O = phosphonate(in) + ADP + phosphate + H(+). Functionally, part of the ABC transporter complex PhnCDE involved in phosphonates import. Responsible for energy coupling to the transport system. This Albidiferax ferrireducens (strain ATCC BAA-621 / DSM 15236 / T118) (Rhodoferax ferrireducens) protein is Phosphonates import ATP-binding protein PhnC 2.